The primary structure comprises 369 residues: Chorismate synthase (369 aa).

Positions 48 and 54 each coordinate NADP(+). FMN contacts are provided by residues 125 to 127, 238 to 239, G278, 293 to 297, and R319; these read RSS, NA, and KPTSS.

Belongs to the chorismate synthase family. Homotetramer. FMNH2 serves as cofactor.

It catalyses the reaction 5-O-(1-carboxyvinyl)-3-phosphoshikimate = chorismate + phosphate. It functions in the pathway metabolic intermediate biosynthesis; chorismate biosynthesis; chorismate from D-erythrose 4-phosphate and phosphoenolpyruvate: step 7/7. Its function is as follows. Catalyzes the anti-1,4-elimination of the C-3 phosphate and the C-6 proR hydrogen from 5-enolpyruvylshikimate-3-phosphate (EPSP) to yield chorismate, which is the branch point compound that serves as the starting substrate for the three terminal pathways of aromatic amino acid biosynthesis. This reaction introduces a second double bond into the aromatic ring system. In Burkholderia mallei (strain NCTC 10229), this protein is Chorismate synthase.